Here is a 232-residue protein sequence, read N- to C-terminus: Large ribosomal subunit protein uL1 (232 aa).

It belongs to the universal ribosomal protein uL1 family. Part of the 50S ribosomal subunit.

Binds directly to 23S rRNA. The L1 stalk is quite mobile in the ribosome, and is involved in E site tRNA release. In terms of biological role, protein L1 is also a translational repressor protein, it controls the translation of the L11 operon by binding to its mRNA. The sequence is that of Large ribosomal subunit protein uL1 from Francisella tularensis subsp. holarctica (strain LVS).